The primary structure comprises 157 residues: Transcriptional repressor NrdR (157 aa).

The interval 1–21 (MKCPNCHKNGSRVVDSRPADN) is disordered. A zinc finger spans residues 3 to 34 (CPNCHKNGSRVVDSRPADNGHAIRRRRECEQC). Positions 49 to 139 (LLVIKKNGTR…VYREFKDMHA (91 aa)) constitute an ATP-cone domain.

This sequence belongs to the NrdR family. Zn(2+) serves as cofactor.

Its function is as follows. Negatively regulates transcription of bacterial ribonucleotide reductase nrd genes and operons by binding to NrdR-boxes. The sequence is that of Transcriptional repressor NrdR from Ligilactobacillus salivarius (strain UCC118) (Lactobacillus salivarius).